The following is a 372-amino-acid chain: Putative RING-H2 finger protein ATL21A (372 aa).

The N-terminal stretch at 1–20 is a signal peptide; the sequence is MTFSKQLFLYLFFLFPLLHA. Residues 242–262 form a helical membrane-spanning segment; sequence IILLSIIGPLTIFATCIAVGV. The segment at 320 to 362 adopts an RING-type; atypical zinc-finger fold; sequence CPICLSEYASKETVRCIPECDHCFHSECIDVWLKIHGSCPLCR.

Belongs to the RING-type zinc finger family. ATL subfamily.

The protein resides in the membrane. It carries out the reaction S-ubiquitinyl-[E2 ubiquitin-conjugating enzyme]-L-cysteine + [acceptor protein]-L-lysine = [E2 ubiquitin-conjugating enzyme]-L-cysteine + N(6)-ubiquitinyl-[acceptor protein]-L-lysine.. It functions in the pathway protein modification; protein ubiquitination. This is Putative RING-H2 finger protein ATL21A (ATL21A) from Arabidopsis thaliana (Mouse-ear cress).